Consider the following 578-residue polypeptide: Arginine--tRNA ligase (578 aa).

The short motif at 123–133 is the 'HIGH' region element; sequence PNIAKEMHVGH.

Belongs to the class-I aminoacyl-tRNA synthetase family. As to quaternary structure, monomer.

It is found in the cytoplasm. The enzyme catalyses tRNA(Arg) + L-arginine + ATP = L-arginyl-tRNA(Arg) + AMP + diphosphate. The polypeptide is Arginine--tRNA ligase (Baumannia cicadellinicola subsp. Homalodisca coagulata).